A 410-amino-acid chain; its full sequence is Putative competence-damage inducible protein (410 aa).

The protein belongs to the CinA family.

The polypeptide is Putative competence-damage inducible protein (Finegoldia magna (strain ATCC 29328 / DSM 20472 / WAL 2508) (Peptostreptococcus magnus)).